The sequence spans 185 residues: Elongation factor P (185 aa).

This sequence belongs to the elongation factor P family.

The protein resides in the cytoplasm. It participates in protein biosynthesis; polypeptide chain elongation. Its function is as follows. Involved in peptide bond synthesis. Stimulates efficient translation and peptide-bond synthesis on native or reconstituted 70S ribosomes in vitro. Probably functions indirectly by altering the affinity of the ribosome for aminoacyl-tRNA, thus increasing their reactivity as acceptors for peptidyl transferase. This chain is Elongation factor P, found in Clostridium tetani (strain Massachusetts / E88).